A 198-amino-acid polypeptide reads, in one-letter code: Nucleoid occlusion factor SlmA (198 aa).

One can recognise an HTH tetR-type domain in the interval 10 to 70; the sequence is NRREEILQSL…SLIEFIEDSL (61 aa). The H-T-H motif DNA-binding region spans 33–52; it reads TTAKLAASVGVSEAALYRHF. Residues 117–144 adopt a coiled-coil conformation; the sequence is EQDRLQGRINQLFERIEAQLRQVLREKR.

This sequence belongs to the nucleoid occlusion factor SlmA family. As to quaternary structure, homodimer. Interacts with FtsZ.

Its subcellular location is the cytoplasm. It is found in the nucleoid. In terms of biological role, required for nucleoid occlusion (NO) phenomenon, which prevents Z-ring formation and cell division over the nucleoid. Acts as a DNA-associated cell division inhibitor that binds simultaneously chromosomal DNA and FtsZ, and disrupts the assembly of FtsZ polymers. SlmA-DNA-binding sequences (SBS) are dispersed on non-Ter regions of the chromosome, preventing FtsZ polymerization at these regions. This Escherichia coli (strain 55989 / EAEC) protein is Nucleoid occlusion factor SlmA.